A 185-amino-acid polypeptide reads, in one-letter code: Peptidyl-tRNA hydrolase (185 aa).

Tyr-14 serves as a coordination point for tRNA. His-19 functions as the Proton acceptor in the catalytic mechanism. Tyr-65, Asn-67, and Asn-113 together coordinate tRNA.

It belongs to the PTH family. In terms of assembly, monomer.

It localises to the cytoplasm. The catalysed reaction is an N-acyl-L-alpha-aminoacyl-tRNA + H2O = an N-acyl-L-amino acid + a tRNA + H(+). Hydrolyzes ribosome-free peptidyl-tRNAs (with 1 or more amino acids incorporated), which drop off the ribosome during protein synthesis, or as a result of ribosome stalling. Its function is as follows. Catalyzes the release of premature peptidyl moieties from peptidyl-tRNA molecules trapped in stalled 50S ribosomal subunits, and thus maintains levels of free tRNAs and 50S ribosomes. This is Peptidyl-tRNA hydrolase from Rickettsia prowazekii (strain Madrid E).